The primary structure comprises 250 residues: Ribosomal RNA small subunit methyltransferase J (250 aa).

Residues 101 to 102 (RD), 117 to 118 (ER), 153 to 154 (SS), and D171 contribute to the S-adenosyl-L-methionine site.

The protein belongs to the methyltransferase superfamily. RsmJ family.

It localises to the cytoplasm. It catalyses the reaction guanosine(1516) in 16S rRNA + S-adenosyl-L-methionine = N(2)-methylguanosine(1516) in 16S rRNA + S-adenosyl-L-homocysteine + H(+). Functionally, specifically methylates the guanosine in position 1516 of 16S rRNA. The polypeptide is Ribosomal RNA small subunit methyltransferase J (Cronobacter sakazakii (strain ATCC BAA-894) (Enterobacter sakazakii)).